The primary structure comprises 163 residues: Lipoprotein signal peptidase (163 aa).

The next 3 helical transmembrane spans lie at isoleucine 3–leucine 23, asparagine 70–asparagine 90, and isoleucine 94–phenylalanine 114. Residues aspartate 125 and aspartate 143 contribute to the active site. Residues tryptophan 134–isoleucine 154 traverse the membrane as a helical segment.

This sequence belongs to the peptidase A8 family.

Its subcellular location is the cell membrane. The enzyme catalyses Release of signal peptides from bacterial membrane prolipoproteins. Hydrolyzes -Xaa-Yaa-Zaa-|-(S,diacylglyceryl)Cys-, in which Xaa is hydrophobic (preferably Leu), and Yaa (Ala or Ser) and Zaa (Gly or Ala) have small, neutral side chains.. It participates in protein modification; lipoprotein biosynthesis (signal peptide cleavage). Its function is as follows. This protein specifically catalyzes the removal of signal peptides from prolipoproteins. In Buchnera aphidicola subsp. Baizongia pistaciae (strain Bp), this protein is Lipoprotein signal peptidase.